Here is a 219-residue protein sequence, read N- to C-terminus: Large ribosomal subunit protein uL3 (219 aa).

Q151 is modified (N5-methylglutamine).

Belongs to the universal ribosomal protein uL3 family. Part of the 50S ribosomal subunit. Forms a cluster with proteins L14 and L19. Methylated by PrmB.

Functionally, one of the primary rRNA binding proteins, it binds directly near the 3'-end of the 23S rRNA, where it nucleates assembly of the 50S subunit. This chain is Large ribosomal subunit protein uL3, found in Blochmanniella floridana.